The sequence spans 95 residues: MCYTLGFVTGVLFLLFDRSPFVRFHAVQSTLTFSTITALVILLPVLPGGALLSRVVMAFSIILWAFCIVKASRGEAFKLPIFGDIAEEQLSLNYT.

A run of 3 helical transmembrane segments spans residues 2 to 22, 32 to 52, and 55 to 75; these read CYTL…SPFV, TFST…GALL, and VVMA…SRGE.

It belongs to the UPF0132 family.

Its subcellular location is the cell membrane. This is UPF0132 membrane protein AF_0736 from Archaeoglobus fulgidus (strain ATCC 49558 / DSM 4304 / JCM 9628 / NBRC 100126 / VC-16).